A 456-amino-acid polypeptide reads, in one-letter code: tRNA modification GTPase MnmE (456 aa).

Arg-24, Glu-81, and Lys-120 together coordinate (6S)-5-formyl-5,6,7,8-tetrahydrofolate. The 164-residue stretch at 216–379 (GMTVVIAGRP…LRDHLKACMG (164 aa)) folds into the TrmE-type G domain. K(+) is bound at residue Asn-226. GTP contacts are provided by residues 226-231 (NAGKSS), 245-251 (TEIAGTT), 270-273 (DTAG), and 335-338 (NKAD). Ser-230 serves as a coordination point for Mg(2+). Residues Thr-245, Ile-247, and Thr-250 each coordinate K(+). Thr-251 lines the Mg(2+) pocket. Lys-456 contacts (6S)-5-formyl-5,6,7,8-tetrahydrofolate.

It belongs to the TRAFAC class TrmE-Era-EngA-EngB-Septin-like GTPase superfamily. TrmE GTPase family. Homodimer. Heterotetramer of two MnmE and two MnmG subunits. It depends on K(+) as a cofactor.

It is found in the cytoplasm. In terms of biological role, exhibits a very high intrinsic GTPase hydrolysis rate. Involved in the addition of a carboxymethylaminomethyl (cmnm) group at the wobble position (U34) of certain tRNAs, forming tRNA-cmnm(5)s(2)U34. This is tRNA modification GTPase MnmE from Pseudomonas fluorescens (strain Pf0-1).